A 483-amino-acid polypeptide reads, in one-letter code: Cytochrome P450 monooxygenase stcF (483 aa).

Cys-424 lines the heme pocket.

It belongs to the cytochrome P450 family. It depends on heme as a cofactor.

It participates in mycotoxin biosynthesis; sterigmatocystin biosynthesis. Functionally, cytochrome P450 monooxygenase; part of the gene cluster that mediates the biosynthesis of sterigmatocystin (ST), a polyketide-derived furanocoumarin which is part of the most toxic and carcinogenic compounds among the known mycotoxins. The first step in the biosynthesis of sterigmatocystin is the production of hexanoate by the fatty acid synthase (FAS) units stcJ and stcK. The polyketide backbone is assembled by the non-reducing polyketide synthase stcA by condensation of the starter hexanoyl-CoA and 7 malonyl-CoA extender units followed by cyclization and release of norsolorinic acid. Norsolorinic acid is the first stable intermediate in the biosynthesis of sterigmatocystin and is converted into averantin (AVN) by the ketoreductase stcE which reduces the hexanoate ketone to an alcohol. Averantin is then oxidized into 5'-hydroxyaverantin (HAVN) by the cytochrome P450 monooxygenase stcF. 5'-hydroxyaverantin is further converted to 5'-oxyaverantin (OAVN) by the 5'-hydroxyaverantin dehydrogenase stcG. The next step is the conversion of OAVN into averufin (AVF) which is catalyzed by a yet to be identified enzyme. The cytochrome P450 monooxygenase stcB and the flavin-binding monooxygenase stcW are both required for the conversion of averufin to 1-hydroxyversicolorone. The esterase stcI probably catalyzes the formation of versiconal hemiacetal acetate from 1-hydroxyversicolorone. The oxydoreductase stcN then probably catalyzes the biosynthetic step from versiconal to versicolorin B (VERB). The next step is performed by the versicolorin B desaturase stcL to produce versicolorin A (VERA). The ketoreductase stcU and the cytochrome P450 monooxygenase stcS are involved in the conversion of versicolorin A to demethylsterigmatocystin. The Baeyer-Villiger oxidas stcQ and the reductase stcR might be involved in the biosynthetic step from versicolorin A to demethylsterigmatocystin. The final step in the biosynthesis of sterigmatocystin is the methylation of demethylsterigmatocystin catalyzed by the methyltransferase stcP. This is Cytochrome P450 monooxygenase stcF from Emericella nidulans (strain FGSC A4 / ATCC 38163 / CBS 112.46 / NRRL 194 / M139) (Aspergillus nidulans).